The primary structure comprises 544 residues: Chaperonin GroEL (544 aa).

ATP is bound by residues 30–33 (TLGP), K51, 87–91 (DGTTT), G415, 479–481 (NAA), and D495.

This sequence belongs to the chaperonin (HSP60) family. As to quaternary structure, forms a cylinder of 14 subunits composed of two heptameric rings stacked back-to-back. Interacts with the co-chaperonin GroES.

The protein resides in the cytoplasm. It carries out the reaction ATP + H2O + a folded polypeptide = ADP + phosphate + an unfolded polypeptide.. Its function is as follows. Together with its co-chaperonin GroES, plays an essential role in assisting protein folding. The GroEL-GroES system forms a nano-cage that allows encapsulation of the non-native substrate proteins and provides a physical environment optimized to promote and accelerate protein folding. The chain is Chaperonin GroEL from Francisella tularensis subsp. mediasiatica (strain FSC147).